The sequence spans 760 residues: Sphingosine kinase B (760 aa).

The segment at 1 to 108 (MENNNNEPAE…NNNNNEPVTS (108 aa)) is disordered. Over residues 12–39 (VQEKGPKLKNDIDLNDQFKDEKEKKEEI) the composition is skewed to basic and acidic residues. Positions 40 to 106 (SSSSIENKNN…NNNNNNNEPV (67 aa)) are enriched in low complexity. One can recognise a DAGKc domain in the interval 247-383 (PKNRKIRILI…LDVCIVQQPT (137 aa)). ATP-binding positions include 257-259 (NPK) and T288. 313–316 (SGDG) is a substrate binding site. The active-site Proton donor/acceptor is D315. Residues E320 and 345-347 (GTG) each bind ATP. The tract at residues 394–438 (TVTTTTTTTSPTSASPTITSANNNNNNNNNNNNNNNNNNNNNNNN) is disordered. D461 is a binding site for substrate. Residues R468 and R474 each contribute to the ATP site. A disordered region spans residues 535 to 605 (DNDNNNKNKN…SSPRSDINMS (71 aa)). The span at 549–597 (EINSTTSNNNNNNNTTTTSTSSSTSTSTSTSSLTATTTTAKSTNSLSSS) shows a compositional bias: low complexity. 734–736 (DGE) is a binding site for ATP.

It catalyses the reaction a sphingoid base + ATP = a sphingoid 1-phosphate + ADP + H(+). Its activity is regulated as follows. Inhibited by N,N,-dimethylsphingosine. Its function is as follows. Catalyzes the phosphorylation of sphingosine to form sphingosine-1-phosphate (S1P), which probably acts intracellularly as a second messenger perhaps by promoting cell proliferation. This is Sphingosine kinase B (sgkB) from Dictyostelium discoideum (Social amoeba).